The primary structure comprises 397 residues: MVSSSTIKSLIEKKGKDLPESVKQELYEKLIKYNEKYKLTKAEVETIIDEVVKEYERALVEPGEAVGTVAAQSIGEPSTQMTLNTFHYAGVAEINVTLGLPRIIEIVDARKNPSTPMMTVYLDEEHRYDREKAEEVARRIEGTTLENLARTTTLDLINMEFIVEIDPERLEKSGLTMEKVLKKLQSSFKSAEFEMEGYTLIVRPKKFEKISDLRRLAEKVKKHRLKGLSGVGKTIVRKEGDEYVIYTEGSNFKQVLKVPGVDPTRTKTNNIHEIAEVLGIEAARNAIIEEIMNTMREQGLEVDIRHIMLVADIMTLDGVVRPIGRHGVVGEKASVLARAAFEITVQHLFEAAERGEVDNLSGVIENVLIGQPVPVGTGMVKLTMKLPLRPQKEKEEV.

This sequence belongs to the RNA polymerase beta' chain family. Part of the RNA polymerase complex.

The protein resides in the cytoplasm. It carries out the reaction RNA(n) + a ribonucleoside 5'-triphosphate = RNA(n+1) + diphosphate. Functionally, DNA-dependent RNA polymerase (RNAP) catalyzes the transcription of DNA into RNA using the four ribonucleoside triphosphates as substrates. Forms part of the jaw domain. This chain is DNA-directed RNA polymerase subunit Rpo1C, found in Pyrococcus abyssi (strain GE5 / Orsay).